The sequence spans 890 residues: V-type proton ATPase subunit a, Golgi isoform (890 aa).

Met-1 is modified (N-acetylmethionine). Residues 1 to 450 are Cytoplasmic-facing; that stretch reads MNQEEAIFRS…DAYGIATYKE (450 aa). A coiled-coil region spans residues 113-154; the sequence is LENVNDMVKEITDCESRARQLDESLDSLRSKLNDLLEQRQVI. A phosphoserine mark is found at Ser-223 and Ser-228. The stretch at 297–347 forms a coiled coil; that stretch reads LKKVKRVIDSLNGKIVSLNTRSSELVDTLNRQIDDLQRILDTTEQTLHTEL. The helical transmembrane segment at 451 to 469 threads the bilayer; that stretch reads INAGLATVVTFPFMFAIMF. At 470-471 the chain is on the vacuolar side; it reads GD. Residues 472–488 form a helical membrane-spanning segment; sequence MGHGFILFLMALFLVLN. At 489 to 502 the chain is on the cytoplasmic side; that stretch reads ERKFGAMHRDEIFD. Residues 503 to 532 form a helical membrane-spanning segment; the sequence is MAFTGRYVLLLMGAFSVYTGLLYNDIFSKS. Residues 533 to 580 lie on the Vacuolar side of the membrane; the sequence is MTIFKSGWQWPSTFRKGESIEAKKTGVYPFGLDFAWHGTDNGLLFSNS. Residues 581-600 traverse the membrane as a helical segment; the sequence is YKMKLSILMGYAHMTYSFMF. Topologically, residues 601-618 are cytoplasmic; that stretch reads SYINYRAKNSKVDIIGNF. A helical membrane pass occupies residues 619-639; the sequence is IPGLVFMQSIFGYLSWAIVYK. Over 640–682 the chain is Vacuolar; that stretch reads WSKDWIKDDKPAPGLLNMLINMFLAPGTIDDQLYSGQAKLQVV. A helical transmembrane segment spans residues 683 to 702; that stretch reads LLLAALVCVPWLLLYKPLTL. Topologically, residues 703-779 are cytoplasmic; the sequence is RRLNKNGGGG…DVMIHQVIHT (77 aa). Residues 780–804 traverse the membrane as a helical segment; the sequence is IEFCLNCISHTASYLRLWALSLAHA. Over 805–828 the chain is Vacuolar; that stretch reads QLSSVLWDMTISNAFSSKNSGSPL. Residues 829–867 form a helical membrane-spanning segment; it reads AVMKVVFLFAMWFVLTVCILVFMEGTSAMLHALRLHWVE. At 868-890 the chain is on the cytoplasmic side; sequence AMSKFFEGEGYAYEPFSFRAIIE.

The protein belongs to the V-ATPase 116 kDa subunit family. In terms of assembly, V-ATPase is a heteromultimeric enzyme composed of a peripheral catalytic V1 complex (components A to H) attached to an integral membrane V0 proton pore complex (components: a, c, c', c'', d, e, f and VOA1). In terms of processing, glycosylated.

The protein resides in the endosome membrane. It is found in the golgi apparatus membrane. In terms of biological role, subunit of the V0 complex of vacuolar(H+)-ATPase (V-ATPase), a multisubunit enzyme composed of a peripheral complex (V1) that hydrolyzes ATP and a membrane integral complex (V0) that translocates protons. V-ATPase is responsible for acidifying and maintaining the pH of intracellular compartments. Is present only in Golgi- and endosome-residing V-ATPase complexes; enzymes containing this subunit have a 4-fold lower ratio of proton transport to ATP hydrolysis than complexes containing the vacuolar isoform and do not dissociate V1 and V0 in response to glucose depletion. The chain is V-type proton ATPase subunit a, Golgi isoform (STV1) from Saccharomyces cerevisiae (strain ATCC 204508 / S288c) (Baker's yeast).